Reading from the N-terminus, the 229-residue chain is DNA repair protein RecO (229 aa).

It belongs to the RecO family.

Its function is as follows. Involved in DNA repair and RecF pathway recombination. The chain is DNA repair protein RecO from Legionella pneumophila (strain Lens).